We begin with the raw amino-acid sequence, 326 residues long: Vomeronasal type-1 receptor 100 (326 aa).

Residues 1–32 (MSEFPFFSPQPLFSYMMNKNSRVHTDSNIRNT) are Extracellular-facing. A helical membrane pass occupies residues 33–53 (FFTEIGIGILANSFLLLFHIF). Topologically, residues 54–70 (KFIRGQRSRLTDLPIGL) are cytoplasmic. Residues 71–91 (LSLIHLLMLLMGAFIAIDIFI) form a helical membrane-spanning segment. Residues 92 to 104 (SWRGWDDIICKFL) lie on the Extracellular side of the membrane. Cys-101 and Cys-188 are oxidised to a cystine. A helical membrane pass occupies residues 105-127 (VYLYRSFRGLSLCTTCMLSVLQA). The Cytoplasmic segment spans residues 128 to 149 (ITLSPRSSCLAKFKHKSPHHVS). Residues 150-170 (CAIISLSILYMFISSHLLVSI) form a helical membrane-spanning segment. Residues 171–209 (NATPNLTTNNFMQVTQSCYIIPLSYLMQSMFSTLLAIRD) lie on the Extracellular side of the membrane. An N-linked (GlcNAc...) asparagine glycan is attached at Asn-175. A helical membrane pass occupies residues 210–230 (ISLISLMVLSTCYMVVLLCRH). Residues 231 to 254 (RNQIQHLQGTNLSPKASPEQRATQ) lie on the Cytoplasmic side of the membrane. A helical transmembrane segment spans residues 255 to 275 (TILMLMTFFVLMSIFDSIVSC). The Extracellular segment spans residues 276–285 (SRTMYLNDPT). Residues 286 to 306 (SYYIQIFVVYIYATVSPFVFM) traverse the membrane as a helical segment. Residues 307-326 (STEKHIVNFLKSMCVRVKNV) lie on the Cytoplasmic side of the membrane.

This sequence belongs to the G-protein coupled receptor 1 family. As to expression, expressed in 1-4% of neurons of the vomeronasal organ. Only one pheromone receptor gene may be expressed in a particular neuron. Not expressed in the main olfactory epithelium.

The protein resides in the cell membrane. In terms of biological role, putative pheromone receptor implicated in the regulation of social as well as reproductive behavior. The sequence is that of Vomeronasal type-1 receptor 100 (Vom1r100) from Rattus norvegicus (Rat).